The primary structure comprises 281 residues: Glycerol uptake facilitator protein (281 aa).

Topologically, residues 1 to 5 (MSQTS) are cytoplasmic. A helical membrane pass occupies residues 6 to 34 (TLKGQCIAEFLGTGLLIFFGVGCVAALKV). At 35–39 (AGASF) the chain is on the periplasmic side. The helical transmembrane segment at 40-60 (GQWEISVIWGLGVAMAIYLTA) threads the bilayer. Topologically, residues 61–63 (GVS) are cytoplasmic. Residues 64–67 (GAHL) lie within the membrane without spanning it. The NPA 1 motif lies at 68 to 70 (NPA). The helical intramembrane region spans 68–78 (NPAVTIALWLF). The Cytoplasmic segment spans residues 79–84 (ACFDKR). A helical membrane pass occupies residues 85-108 (KVIPFIVSQVAGAFCAAALVYGLY). The Periplasmic portion of the chain corresponds to 109–143 (YNLFFDFEQTHHIVRGSVESVDLAGTFSTYPNPHI). A helical transmembrane segment spans residues 144 to 169 (NFVQAFAVEMVITAILMGLILALTDD). Over 170-177 (GNGVPRGP) the chain is Cytoplasmic. A helical transmembrane segment spans residues 178 to 194 (LAPLLIGLLIAVIGASM). Over 195-198 (GPLT) the chain is Periplasmic. Residues 199-202 (GFAM) lie within the membrane without spanning it. Positions 203–205 (NPA) match the NPA 2 motif. The segment at residues 203–216 (NPARDFGPKVFAWL) is an intramembrane region (helical). Residues 217 to 231 (AGWGNVAFTGGRDIP) are Periplasmic-facing. Residues 232–254 (YFLVPLFSPIVGAIVGAFAYRKL) form a helical membrane-spanning segment. At 255–281 (IGRHLPCDICVVEEKETTTPSEQKASL) the chain is on the cytoplasmic side.

It belongs to the MIP/aquaporin (TC 1.A.8) family. Homotetramer.

Its subcellular location is the cell inner membrane. It carries out the reaction glycerol(in) = glycerol(out). In terms of biological role, mediates glycerol diffusion across the cytoplasmic membrane via a pore-type mechanism. The polypeptide is Glycerol uptake facilitator protein (glpF) (Shigella flexneri).